Here is a 358-residue protein sequence, read N- to C-terminus: G-protein coupled receptor 20 (358 aa).

The Extracellular segment spans residues 1 to 48; that stretch reads MPSVSPAGPSAGAVPNATAVTTVRTNASGLEVPLFHLFARLDEELHGT. Residues N16 and N26 are each glycosylated (N-linked (GlcNAc...) asparagine). Residues 49 to 69 form a helical membrane-spanning segment; sequence FPGLWLALMAVHGAIFLAGLV. Topologically, residues 70–86 are cytoplasmic; sequence LNGLALYVFCCRTRAKT. The helical transmembrane segment at 87-107 threads the bilayer; sequence PSVIYTINLVVTDLLVGLSLP. The Extracellular segment spans residues 108 to 125; that stretch reads TRFAVYYGARGCLRCAFP. A helical membrane pass occupies residues 126–146; the sequence is HVLGYFLNMHCSILFLTCICV. At 147–168 the chain is on the cytoplasmic side; sequence DRYLAIVRPEGSRRCRQPACAR. A helical transmembrane segment spans residues 169-189; it reads AVCAFVWLAAGAVTLSVLGVT. The Extracellular segment spans residues 190–196; that stretch reads GSRPCCR. A helical transmembrane segment spans residues 197–217; it reads VFALTVLEFLLPLLVISVFTG. Over 218-238 the chain is Cytoplasmic; that stretch reads RIMCALSRPGLLHQGRQRRVR. The helical transmembrane segment at 239–259 threads the bilayer; that stretch reads AMQLLLTVLIIFLVCFTPFHA. Over 260-275 the chain is Extracellular; sequence RQVAVALWPDMPHHTS. A helical transmembrane segment spans residues 276–296; sequence LVVYHVAVTLSSLNSCMDPIV. Over 297–358 the chain is Cytoplasmic; it reads YCFVTSGFQA…TQALANGPEA (62 aa). The tract at residues 315 to 339 is disordered; it reads HGEREPSSGDVVSMHRSSKGSGRHH. Residues 330–339 show a composition bias toward basic residues; sequence RSSKGSGRHH.

It belongs to the G-protein coupled receptor 1 family. Ubiquitous with highest levels in intestinal tissues. In the brain detected in thalamus, putamen, and caudate, but not in frontal cortex, pons and hypothalamus.

It is found in the cell membrane. In terms of biological role, orphan receptor with constitutive G(i) signaling activity that activate cyclic AMP. This is G-protein coupled receptor 20 (GPR20) from Homo sapiens (Human).